Here is a 172-residue protein sequence, read N- to C-terminus: Probable calcium-binding protein CML28 (172 aa).

EF-hand domains follow at residues M1–F36, I37–D72, D95–K130, and R133–A168. Residues D14, N16, D18, R20, E25, D50, N52, D54, C56, E61, D108, N110, D112, E119, D146, D148, D150, R152, and E157 each coordinate Ca(2+).

Functionally, potential calcium sensor. The chain is Probable calcium-binding protein CML28 (CML28) from Oryza sativa subsp. japonica (Rice).